Consider the following 359-residue polypeptide: DNA polymerase IV (359 aa).

Residues 4–185 (IIHVDMDCFF…LALIKIPGVG (182 aa)) enclose the UmuC domain. D8 and D103 together coordinate Mg(2+). E104 is a catalytic residue.

This sequence belongs to the DNA polymerase type-Y family. In terms of assembly, monomer. It depends on Mg(2+) as a cofactor.

It is found in the cytoplasm. The catalysed reaction is DNA(n) + a 2'-deoxyribonucleoside 5'-triphosphate = DNA(n+1) + diphosphate. Poorly processive, error-prone DNA polymerase involved in untargeted mutagenesis. Copies undamaged DNA at stalled replication forks, which arise in vivo from mismatched or misaligned primer ends. These misaligned primers can be extended by PolIV. Exhibits no 3'-5' exonuclease (proofreading) activity. May be involved in translesional synthesis, in conjunction with the beta clamp from PolIII. This chain is DNA polymerase IV, found in Shewanella loihica (strain ATCC BAA-1088 / PV-4).